The primary structure comprises 209 residues: FMN-dependent NADH:quinone oxidoreductase (209 aa).

FMN contacts are provided by residues Ser9 and 15 to 17 (SNS).

It belongs to the azoreductase type 1 family. In terms of assembly, homodimer. FMN is required as a cofactor.

The catalysed reaction is 2 a quinone + NADH + H(+) = 2 a 1,4-benzosemiquinone + NAD(+). The enzyme catalyses N,N-dimethyl-1,4-phenylenediamine + anthranilate + 2 NAD(+) = 2-(4-dimethylaminophenyl)diazenylbenzoate + 2 NADH + 2 H(+). Functionally, quinone reductase that provides resistance to thiol-specific stress caused by electrophilic quinones. In terms of biological role, also exhibits azoreductase activity. Catalyzes the reductive cleavage of the azo bond in aromatic azo compounds to the corresponding amines. This chain is FMN-dependent NADH:quinone oxidoreductase, found in Bordetella bronchiseptica (strain ATCC BAA-588 / NCTC 13252 / RB50) (Alcaligenes bronchisepticus).